The chain runs to 605 residues: Translation factor GUF1 homolog, chloroplastic (605 aa).

The region spanning 7 to 189 (RRIRNFSIIA…RIVQVVPPPR (183 aa)) is the tr-type G domain. GTP-binding positions include 16-23 (AHIDHGKS), 82-86 (DTPGH), and 136-139 (NKID).

Belongs to the TRAFAC class translation factor GTPase superfamily. Classic translation factor GTPase family. LepA subfamily.

It is found in the plastid. Its subcellular location is the chloroplast. It catalyses the reaction GTP + H2O = GDP + phosphate + H(+). Promotes chloroplast protein synthesis. May act as a fidelity factor of the translation reaction, by catalyzing a one-codon backward translocation of tRNAs on improperly translocated ribosomes. This chain is Translation factor GUF1 homolog, chloroplastic, found in Ostreococcus lucimarinus (strain CCE9901).